The chain runs to 339 residues: MEEEIKSLINVGFLTIISVSYCYCLPPRIKSGVLRLLSIFPVCVLLVVLPLFFSFSIFTSTTAFFLSAIANSRLILFSFDQGPLFPLPSNLFRFTCFTCFPIQRQQNPKSQDHLSTYVFPVKIAIFVVLLYVHNDIQNLPRTFLLCLHPLYVYLLLEILLTLLRILMTIILGCDLEPHFHEPYLATSLQDFWGRRWNLIVSASLRAIVYTPVRRVCQRVMSSDYAMLIGVFATFVTSGVAHEVVFFYITRAMPTGEVALFFLLHGVCTVAEVAAKRTAFVRRWPVRPVVSWMFTIAFVNVTAGWLFFPQLIRNNLGERCSNEISLLIDFFRSKLFYFPQ.

7 consecutive transmembrane segments (helical) span residues 7 to 27 (SLINVGFLTIISVSYCYCLPP), 39 to 59 (IFPVCVLLVVLPLFFSFSIFT), 113 to 133 (HLSTYVFPVKIAIFVVLLYVH), 143 to 163 (FLLCLHPLYVYLLLEILLTLL), 226 to 246 (MLIGVFATFVTSGVAHEVVFF), 254 to 274 (TGEVALFFLLHGVCTVAEVAA), and 287 to 307 (PVVSWMFTIAFVNVTAGWLFF).

Belongs to the wax synthase family.

Its subcellular location is the membrane. The enzyme catalyses a long chain fatty alcohol + a fatty acyl-CoA = a wax ester + CoA. Its function is as follows. Catalyzes the final step in the synthesis of long-chain linear esters (waxes). The chain is Probable long-chain-alcohol O-fatty-acyltransferase 7 (AT7) from Arabidopsis thaliana (Mouse-ear cress).